The following is a 533-amino-acid chain: MDTGLCVPLRGISGLLLLLCALPWAEGAKVLVLPMEGSQWLSMRDVVRELHARGHQTVVLASEVTVHIKGEDFFTLKTYAFPYTKEEYQQEILSDIEKTFKTQHFVKAFFETTASIRNFFDLYSNSCIALLHNKMLIQQLNSSFFDVILTDPIFPCGAVLAKYLQIPAVFILRSLSCGIEYEATQCPNPSSYIPNLLTRLSDHMDFLQRVQNMLYYLVLKYICRLSITPYESLASELLQREVSLVEVLSHASVWLFRGDFVLDYPRPIMPNMVFIGGINCVTKKPLSQEFEAYVNASGEHGIVVFSLGSMVSEIPEKKAMEIAEALGRIPQTVLWRYTGTRPSNLAKNTILVKWLPQNDLLGHPKTRAFITHSGSHGIYEGICNGVPMVMMPLFGDQMDNAKRMETRGAGVTLNVLEMTADDLENALKTVINNKSYKENIMRLSSLHKDRPIEPLDLAVFWVEYVMRHKGAPHLRPAAHDLTWYQYHSLDVIGFLLAIVLTVVFIVFKCCAYGCRKCFGGKGRVKKSHKSKTH.

The N-terminal stretch at 1 to 27 (MDTGLCVPLRGISGLLLLLCALPWAEG) is a signal peptide. N-linked (GlcNAc...) asparagine glycosylation is found at Asn-141, Asn-295, and Asn-433. Residues 491 to 511 (VIGFLLAIVLTVVFIVFKCCA) form a helical membrane-spanning segment.

It belongs to the UDP-glycosyltransferase family. Expressed in kidney.

Its subcellular location is the microsome. The protein resides in the endoplasmic reticulum membrane. It catalyses the reaction glucuronate acceptor + UDP-alpha-D-glucuronate = acceptor beta-D-glucuronoside + UDP + H(+). Functionally, UDPGT is of major importance in the conjugation and subsequent elimination of potentially toxic xenobiotics and endogenous compounds. The polypeptide is UDP-glucuronosyltransferase 1-2 (Ugt1a2) (Mus musculus (Mouse)).